A 643-amino-acid polypeptide reads, in one-letter code: Extracellular metalloproteinase 4 (643 aa).

An N-terminal signal peptide occupies residues 1–18 (MHGLLLAGLLALPLNVLA). A propeptide spanning residues 19 to 254 (HPTESHSSGI…VHSVVDYVSA (236 aa)) is cleaved from the precursor. The span at 47–57 (TKSDAVPKQDD) shows a compositional bias: basic and acidic residues. The disordered stretch occupies residues 47–71 (TKSDAVPKQDDESFTTSSTGDDNVS). The span at 60–71 (FTTSSTGDDNVS) shows a compositional bias: polar residues. N-linked (GlcNAc...) asparagine glycans are attached at residues asparagine 271 and asparagine 420. A Zn(2+)-binding site is contributed by histidine 437. Residue glutamate 438 is part of the active site. Histidine 441 serves as a coordination point for Zn(2+). Asparagine 510 carries N-linked (GlcNAc...) asparagine glycosylation.

It belongs to the peptidase M36 family. Zn(2+) is required as a cofactor.

Its subcellular location is the secreted. Its function is as follows. Secreted metalloproteinase probably acting as a virulence factor. The polypeptide is Extracellular metalloproteinase 4 (MEP4) (Trichophyton equinum (Horse ringworm fungus)).